Here is a 319-residue protein sequence, read N- to C-terminus: Phosphoenolpyruvate transferase (319 aa).

Residue Asp50 coordinates 7,8-didemethyl-8-hydroxy-5-deazariboflavin.

The protein belongs to the CofD family. As to quaternary structure, homodimer. Requires Mg(2+) as cofactor.

The enzyme catalyses enolpyruvoyl-2-diphospho-5'-guanosine + 7,8-didemethyl-8-hydroxy-5-deazariboflavin = dehydro coenzyme F420-0 + GMP + H(+). Its pathway is cofactor biosynthesis; coenzyme F420 biosynthesis. Catalyzes the transfer of the phosphoenolpyruvate moiety from enoylpyruvoyl-2-diphospho-5'-guanosine (EPPG) to 7,8-didemethyl-8-hydroxy-5-deazariboflavin (FO) with the formation of dehydro coenzyme F420-0 and GMP. The protein is Phosphoenolpyruvate transferase of Streptomyces coelicolor (strain ATCC BAA-471 / A3(2) / M145).